The following is a 274-amino-acid chain: Diaminopimelate epimerase (274 aa).

Substrate is bound by residues N11, Q44, and N64. Residue C73 is the Proton donor of the active site. Residues 74–75 (GN), N157, N190, and 208–209 (ER) each bind substrate. C217 (proton acceptor) is an active-site residue. A substrate-binding site is contributed by 218-219 (GS).

This sequence belongs to the diaminopimelate epimerase family. As to quaternary structure, homodimer.

Its subcellular location is the cytoplasm. It carries out the reaction (2S,6S)-2,6-diaminopimelate = meso-2,6-diaminopimelate. The protein operates within amino-acid biosynthesis; L-lysine biosynthesis via DAP pathway; DL-2,6-diaminopimelate from LL-2,6-diaminopimelate: step 1/1. Its function is as follows. Catalyzes the stereoinversion of LL-2,6-diaminopimelate (L,L-DAP) to meso-diaminopimelate (meso-DAP), a precursor of L-lysine and an essential component of the bacterial peptidoglycan. This is Diaminopimelate epimerase from Pasteurella multocida (strain Pm70).